The following is a 36-amino-acid chain: MTDLNLPSIFVPXVGLVFPAIAMASXFLHVQKNKIV.

The chain crosses the membrane as a helical span at residues 6 to 28 (LPSIFVPXVGLVFPAIAMASXFL).

The protein belongs to the PsaI family.

It localises to the plastid. The protein localises to the chloroplast thylakoid membrane. Functionally, may help in the organization of the PsaL subunit. The chain is Photosystem I reaction center subunit VIII from Acorus gramineus (Dwarf sweet flag).